Reading from the N-terminus, the 107-residue chain is Anti-adapter protein IraM (107 aa).

It belongs to the IraM/RssC family.

The protein resides in the cytoplasm. Inhibits RpoS proteolysis by regulating RssB activity, thereby increasing the stability of the sigma stress factor RpoS during magnesium starvation. This is Anti-adapter protein IraM from Escherichia coli (strain 55989 / EAEC).